We begin with the raw amino-acid sequence, 333 residues long: Serine racemase (333 aa).

Glutamate 13 is a binding site for Mg(2+). ATP is bound by residues serine 31, serine 32, isoleucine 33, lysine 51, and threonine 52. Lysine 56 functions as the Proton acceptor in the catalytic mechanism. An N6-(pyridoxal phosphate)lysine modification is found at lysine 56. A Ca(2+)-binding site is contributed by proline 69. The residue at position 71 (threonine 71) is a Phosphothreonine. Threonine 81 contacts Ca(2+). The Proton acceptor role is filled by serine 84. Residue asparagine 86 participates in pyridoxal 5'-phosphate binding. Glutamine 89 contacts ATP. At cysteine 113 the chain carries S-nitrosocysteine. Tyrosine 121 is an ATP binding site. Position 154 (asparagine 154) interacts with pyridoxal 5'-phosphate. Aspartate 178 lines the Mg(2+) pocket. Residues glycine 185, glycine 186, glycine 187, glycine 188, and methionine 189 each coordinate pyridoxal 5'-phosphate. Mg(2+) contacts are provided by glutamate 210, alanine 214, aspartate 216, and asparagine 247. 4 residues coordinate Ca(2+): glutamate 210, alanine 214, aspartate 216, and asparagine 247. Residues glutamate 210, alanine 214, and aspartate 216 each coordinate Mn(2+). Lysine 279 contacts ATP. Pyridoxal 5'-phosphate is bound at residue serine 313. Residue asparagine 316 coordinates ATP.

The protein belongs to the serine/threonine dehydratase family. As to quaternary structure, homodimer. Requires Mg(2+) as cofactor. Mn(2+) serves as cofactor. It depends on Ca(2+) as a cofactor. Pyridoxal 5'-phosphate is required as a cofactor. Post-translationally, S-nitrosylated, leading to decrease the enzyme activity. As to expression, expressed in the cerebellum and frontal cortex (at protein level).

The enzyme catalyses L-serine = D-serine. The catalysed reaction is D-serine = pyruvate + NH4(+). It catalyses the reaction L-serine = pyruvate + NH4(+). With respect to regulation, allosterically activated by magnesium, and possibly also other divalent metal cations. Allosterically activated by ATP, ADP or GTP. Competitively inhibited by malonate. Functionally, catalyzes the synthesis of D-serine from L-serine. D-serine is a key coagonist with glutamate at NMDA receptors. Has dehydratase activity towards both L-serine and D-serine. This Rattus norvegicus (Rat) protein is Serine racemase (Srr).